The chain runs to 151 residues: Large ribosomal subunit protein bL9 (151 aa).

Belongs to the bacterial ribosomal protein bL9 family.

Binds to the 23S rRNA. The protein is Large ribosomal subunit protein bL9 of Pelobacter propionicus (strain DSM 2379 / NBRC 103807 / OttBd1).